A 532-amino-acid polypeptide reads, in one-letter code: MADAPIAPVVLVILDGWGYRQTTDYNAIAVANTPVMDSLWEAYPKTLIRTSGKDVGLPEGQMGNSEVGHLNIGAGRIVPQELVRITDAIEDGSIFQSPVLINLCDEVKGRGGKLHLIGLSSAGGVHSHLCHLLGLLDLAKLHSVSDVCVHAITDGRDTNPTEGVNVIEAIQAHIDKIGVGRISTVCGRYYAMDRDRRWDRVKKAYDLLTEDGEGDGRSASQILKDFYAQDITDEFILPTRVAPGAIEPGDGIIFYNFRPDRARQLCYAFTMPDFDGFERDLIQPLSFVTFTQYDPKLPVKVVFEPQSLTNILGEVIAKKGLRQFRTAETEKYPHVTYFFNGGLEQPFEGEDRELIQSPMVATYDKAPVMSAEAVTDTACAAIKKGIYSLVVMNYANPDMVGHTGNMEAAVQAIEAVDRCLGRLLGCINKMGGTVLITADHGNAEYMRDEEGNPWTAHTTNPVPFILVEGEKRKIPGHGANVVLRNDGRLADIAPTILDILQLPQPNNMTGKSLIEPAGFDVKTNRTPVRISL.

The Mn(2+) site is built by D15 and S65. Catalysis depends on S65, which acts as the Phosphoserine intermediate. Substrate is bound by residues H126, 156–157 (RD), R188, R194, 258–261 (RPDR), and K331. Residues D398, H402, D439, H440, and H457 each coordinate Mn(2+).

The protein belongs to the BPG-independent phosphoglycerate mutase family. Monomer. Requires Mn(2+) as cofactor.

The enzyme catalyses (2R)-2-phosphoglycerate = (2R)-3-phosphoglycerate. It functions in the pathway carbohydrate degradation; glycolysis; pyruvate from D-glyceraldehyde 3-phosphate: step 3/5. In terms of biological role, catalyzes the interconversion of 2-phosphoglycerate and 3-phosphoglycerate. This chain is 2,3-bisphosphoglycerate-independent phosphoglycerate mutase, found in Gloeothece citriformis (strain PCC 7424) (Cyanothece sp. (strain PCC 7424)).